We begin with the raw amino-acid sequence, 812 residues long: MKEFPKNYNFTENEKKWQQIWQEKQIYAYNPNAAKEETYVIDTPPPTVSGQLHIGHVYSYTQTDFIVRFQRMMGKNIFYPMGFDDNGLPTERLVEKQKQIKAYNMDRSEFIKICEEVVESEEEKFRSLFNQIALSVDWSLEYQTISPLSRKISQMSFLDLVQKEEIYRTNQPILWDPVDGTALAQADIEDKEKTSFMNYITFKTEQGDPLTIATTRPELLPACVAVFYHPDDGRYKHLAGKSAITPLFNEQVPLLTDPLVRQDKGTGLVMCCTFGDQTDITWWKTHNLPLKTIITKKGTIDFQHETSIDGLKIKEARTKIIDILKEQELLIKQEDITHTVKCAERSGAPLEILTVPQWFVKTISHKEELLKRANELNWHPKHMKIRLENWINAISWDWCISRQRYFGVPFPVWYSKRVGEEGKILYADVTQLPIDPLKDLPMGYSKEEVEPDYDVMDTWATSSVSPQLSTHGISDDFAVNKDRHDKLFPMDLRPQAHEIIRTWAFYTILKAHLHQNTLPWKNIMVSGWCLAEDRSKMSKSKGNVLVPEKLLEQYGSDVIRYWSANSKLGADTAYSEDVMKNGKRLVNKLWNAAKFVFIHFDKLKGEDKKASLLDIKEKITNEFDKWMVNKLVELVKLATNELQNYEYANAMHLTEKFFWVVLCDNYLEISKTRSYDEEHKNPQGQYSSILTLYHVMQTLLKLFAPFMPHITEELYQILYSENSIHVKGSWVNYSDLNYEINAKGAEGLLEILDIVRKFKAEKNLSIKTPIKLLEVSGIVLSAELTEDLKNVTSAEEIQFEMKDDKIKVNIIL.

A 'HIGH' region motif is present at residues 46–56; it reads PTVSGQLHIGH. Residues 536–540 carry the 'KMSKS' region motif; the sequence is KMSKS. Lys539 is an ATP binding site.

The protein belongs to the class-I aminoacyl-tRNA synthetase family. ValS type 2 subfamily. As to quaternary structure, monomer.

Its subcellular location is the cytoplasm. It carries out the reaction tRNA(Val) + L-valine + ATP = L-valyl-tRNA(Val) + AMP + diphosphate. In terms of biological role, catalyzes the attachment of valine to tRNA(Val). As ValRS can inadvertently accommodate and process structurally similar amino acids such as threonine, to avoid such errors, it has a 'posttransfer' editing activity that hydrolyzes mischarged Thr-tRNA(Val) in a tRNA-dependent manner. In Rickettsia conorii (strain ATCC VR-613 / Malish 7), this protein is Valine--tRNA ligase.